We begin with the raw amino-acid sequence, 324 residues long: Serpentine receptor class delta-30 (324 aa).

Transmembrane regions (helical) follow at residues 5–25, 38–58, 83–103, 124–144, 176–196, 227–247, and 258–278; these read IIHSVLSTVGVSLNAFMMYLA, AIITIKTGTDILASIMSFFVM, ACYVGHMLMLCFLEYNLIWMI, VFVAFCLSIPSMVHMAAWFSF, ITLITQLFITAFLVVVAYIWI, FQVFLPSFIFLGVITFASMFT, and AISVIFMFSPICSPFSYILFV. Residues 290-324 are disordered; that stretch reads KQPKPHPEMCGPIRSNTRTTSISVTNNSSHLSSAH. Polar residues predominate over residues 303–324; that stretch reads RSNTRTTSISVTNNSSHLSSAH.

It belongs to the nematode receptor-like protein srd family.

Its subcellular location is the membrane. The polypeptide is Serpentine receptor class delta-30 (srd-30) (Caenorhabditis elegans).